A 410-amino-acid chain; its full sequence is Arginine deiminase (410 aa).

Cys400 acts as the Amidino-cysteine intermediate in catalysis.

It belongs to the arginine deiminase family.

It localises to the cytoplasm. The catalysed reaction is L-arginine + H2O = L-citrulline + NH4(+). Its pathway is amino-acid degradation; L-arginine degradation via ADI pathway; carbamoyl phosphate from L-arginine: step 1/2. This is Arginine deiminase (arcA) from Borreliella burgdorferi (strain ATCC 35210 / DSM 4680 / CIP 102532 / B31) (Borrelia burgdorferi).